Reading from the N-terminus, the 456-residue chain is Phosphatidylinositol N-acetylglucosaminyltransferase gpi3 subunit (456 aa).

The protein belongs to the glycosyltransferase group 1 family. Glycosyltransferase 4 subfamily. As to quaternary structure, component of a Phosphatidylinositol N-acetylglucosaminyltransferase complex.

It carries out the reaction a 1,2-diacyl-sn-glycero-3-phospho-(1D-myo-inositol) + UDP-N-acetyl-alpha-D-glucosamine = a 6-(N-acetyl-alpha-D-glucosaminyl)-1-(1,2-diacyl-sn-glycero-3-phospho)-1D-myo-inositol + UDP + H(+). It participates in glycolipid biosynthesis; glycosylphosphatidylinositol-anchor biosynthesis. Catalytic subunit in the complex catalyzing the transfer of N-acetylglucosamine from UDP-N-acetylglucosamine to phosphatidylinositol, the first step of GPI biosynthesis. The sequence is that of Phosphatidylinositol N-acetylglucosaminyltransferase gpi3 subunit (gpi3) from Schizosaccharomyces pombe (strain 972 / ATCC 24843) (Fission yeast).